Here is a 268-residue protein sequence, read N- to C-terminus: Protein MGF 300-1L (268 aa).

Topologically, residues 1 to 175 (MVSLTTCCLK…QTFKIFYAKN (175 aa)) are cytoplasmic. The helical transmembrane segment at 176–193 (YSLSTLYCIFLAIYYKRY) threads the bilayer. Over 194 to 268 (TALRKMVKIY…MYAFSQNNFW (75 aa)) the chain is Extracellular.

Belongs to the asfivirus MGF 300 family.

It is found in the host membrane. In terms of biological role, plays a role in virus cell tropism, and may be required for efficient virus replication in macrophages. This chain is Protein MGF 300-1L, found in African swine fever virus (isolate Tick/South Africa/Pretoriuskop Pr4/1996) (ASFV).